Here is a 475-residue protein sequence, read N- to C-terminus: MKIERKQSVVLVPHPYQGHLTPMLQLGSILHSQGFSVIVAHTQYNTPNYSNHPQFVFHSMDDGLQGIDMSFPSLENIYDMNENCKAPLRNYLVSMMEEEGDQLACIVYDNVMFFVDDVATQLKLPSIVLRTFSAAYLHSMITILQQPEIYLPFEDSQLLDPLPELHPLRFKDVPFPIINNTVPEPILDFCRAMSDIGSSVATIWNTMQDLESSMLLRLQEHYKVPFFPIGPVHKMASLVSSTSILEEDNSCIEWLDRQAPNSVLYVSLGSLVRIDHKELIETAWGLANSDQPFLWVIRPGSVSGFQCAEALPDGFEKMVGERGRIVKWAPQKQVLAHPAVAGFFTHCGWNSTLESICEEVPMVCRPFLADQLVNARYLSQIYKVGFELEVIERTVIEKTIRKLMLSEEGKDVKKRVADMKQKIVAGMQIDCTSHKNLNDLVDFISALPSRLAPPTPVFGAIMSSNHIASKCIIES.

His19 acts as the Proton acceptor in catalysis. His19 is a binding site for an anthocyanidin. Catalysis depends on Asp109, which acts as the Charge relay. UDP-alpha-D-glucose-binding residues include Thr131, Ala329, Gln331, His346, Trp349, Asn350, Ser351, and Glu354. Ala369 is an an anthocyanidin binding site. Residues Asp370 and Gln371 each contribute to the UDP-alpha-D-glucose site.

Belongs to the UDP-glycosyltransferase family. As to expression, expressed in flowers and fruits.

The protein localises to the cytoplasm. It localises to the nucleus. The enzyme catalyses 2-cis-(+)-abscisate + UDP-alpha-D-glucose = beta-D-glucopyranosyl cis-(+)-abscisate + UDP. Glucosyltransferase acting on abscisic acid (ABA) but not on auxin (IAA). The protein is UDP-glycosyltransferase 76E1 of Solanum lycopersicum (Tomato).